Here is a 146-residue protein sequence, read N- to C-terminus: UPF0260 protein Sama_1927 (146 aa).

This sequence belongs to the UPF0260 family.

The chain is UPF0260 protein Sama_1927 from Shewanella amazonensis (strain ATCC BAA-1098 / SB2B).